Consider the following 281-residue polypeptide: Pantothenate synthetase (281 aa).

31–38 contacts ATP; the sequence is MGNLHAGH. Catalysis depends on histidine 38, which acts as the Proton donor. A (R)-pantoate-binding site is contributed by glutamine 62. Glutamine 62 contributes to the beta-alanine binding site. ATP is bound at residue 150–153; that stretch reads GKKD. Glutamine 156 is a binding site for (R)-pantoate. ATP is bound by residues valine 179 and 187–190; that span reads MSSR.

The protein belongs to the pantothenate synthetase family. As to quaternary structure, homodimer.

The protein resides in the cytoplasm. The catalysed reaction is (R)-pantoate + beta-alanine + ATP = (R)-pantothenate + AMP + diphosphate + H(+). The protein operates within cofactor biosynthesis; (R)-pantothenate biosynthesis; (R)-pantothenate from (R)-pantoate and beta-alanine: step 1/1. Its function is as follows. Catalyzes the condensation of pantoate with beta-alanine in an ATP-dependent reaction via a pantoyl-adenylate intermediate. The chain is Pantothenate synthetase from Xylella fastidiosa (strain 9a5c).